Reading from the N-terminus, the 124-residue chain is UPF0212 protein Hlac_0869 (124 aa).

It belongs to the UPF0212 family.

The sequence is that of UPF0212 protein Hlac_0869 from Halorubrum lacusprofundi (strain ATCC 49239 / DSM 5036 / JCM 8891 / ACAM 34).